Here is a 663-residue protein sequence, read N- to C-terminus: Alcohol oxidase 1 (663 aa).

8 to 38 (DILVLGGGSSGSCIAGRLANLDHSLKVGLIE) is an FAD binding site. Histidine 567 acts as the Proton acceptor in catalysis. Positions 661-663 (ARF) match the Microbody targeting signal motif.

The protein belongs to the GMC oxidoreductase family. Homooctamer. FAD serves as cofactor.

The protein resides in the peroxisome matrix. The catalysed reaction is a primary alcohol + O2 = an aldehyde + H2O2. It participates in energy metabolism; methane degradation. Functionally, major isoform of alcohol oxidase, which catalyzes the oxidation of methanol to formaldehyde and hydrogen peroxide, the first step in the methanol utilization pathway of methylotrophic yeasts. The sequence is that of Alcohol oxidase 1 (AOX1) from Komagataella phaffii (strain ATCC 76273 / CBS 7435 / CECT 11047 / NRRL Y-11430 / Wegner 21-1) (Yeast).